The sequence spans 300 residues: tRNA pseudouridine synthase B (300 aa).

Residue Asp-41 is the Nucleophile of the active site.

It belongs to the pseudouridine synthase TruB family. Type 1 subfamily.

The enzyme catalyses uridine(55) in tRNA = pseudouridine(55) in tRNA. Its function is as follows. Responsible for synthesis of pseudouridine from uracil-55 in the psi GC loop of transfer RNAs. This is tRNA pseudouridine synthase B from Synechococcus sp. (strain WH7803).